The chain runs to 163 residues: NADH-quinone oxidoreductase subunit I (163 aa).

4Fe-4S ferredoxin-type domains lie at 54 to 84 (LRRY…IDSA) and 94 to 123 (TRYD…ETHI). Residues Cys-64, Cys-67, Cys-70, Cys-74, Cys-103, Cys-106, Cys-109, and Cys-113 each contribute to the [4Fe-4S] cluster site.

This sequence belongs to the complex I 23 kDa subunit family. As to quaternary structure, NDH-1 is composed of 14 different subunits. Subunits NuoA, H, J, K, L, M, N constitute the membrane sector of the complex. [4Fe-4S] cluster is required as a cofactor.

The protein resides in the cell inner membrane. The enzyme catalyses a quinone + NADH + 5 H(+)(in) = a quinol + NAD(+) + 4 H(+)(out). Functionally, NDH-1 shuttles electrons from NADH, via FMN and iron-sulfur (Fe-S) centers, to quinones in the respiratory chain. The immediate electron acceptor for the enzyme in this species is believed to be ubiquinone. Couples the redox reaction to proton translocation (for every two electrons transferred, four hydrogen ions are translocated across the cytoplasmic membrane), and thus conserves the redox energy in a proton gradient. This chain is NADH-quinone oxidoreductase subunit I, found in Xanthomonas oryzae pv. oryzae (strain KACC10331 / KXO85).